The sequence spans 803 residues: Spondin-1 (803 aa).

An N-terminal signal peptide occupies residues 1–23 (MGLIFQPLFWQYVATSYALMVLG). A Reelin domain is found at 24–190 (FLDETVEKAI…DLTLEGGNEK (167 aa)). 14 disulfide bridges follow: C39/C124, C152/C178, C195/C331, C196/C335, C198/C409, C437/C474, C448/C483, C453/C488, C496/C532, C507/C511, C542/C548, C553/C589, C564/C568, and C599/C604. Residues 191-383 (TIPDCCACGT…LTSLDHPQSP (193 aa)) form the Spondin domain. Residue N210 is glycosylated (N-linked (GlcNAc...) asparagine). The Ca(2+) site is built by D320, D349, and D353. The disordered stretch occupies residues 353–389 (DSGVTYESPNKPTIPQDKIRPLTSLDHPQSPSMTRGG). Over residues 354–365 (SGVTYESPNKPT) the composition is skewed to polar residues. 5 TSP type-1 domains span residues 436–489 (TCIY…PGCS), 495–549 (TCMM…EECE), 552–605 (SCIV…PECH), 608–662 (PCVL…PECP), and 664–717 (SCEL…RKCQ). The N-linked (GlcNAc...) asparagine glycan is linked to N677. The segment at 722–741 (NERRHLKDAREKRRSEKIKE) is disordered. In terms of domain architecture, TSP type-1 6 spans 750 to 802 (VCKMKPWTAWTECTKFCGGGIQERFMTVKKRFKSSQFTSCKDKKEIRACNVHP).

In terms of tissue distribution, expressed at high levels in the floor plate.

It localises to the secreted. The protein resides in the extracellular space. The protein localises to the extracellular matrix. In terms of biological role, promotes the attachment of spinal cord and sensory neuron cells and the outgrowth of neurites in vitro. May contribute to the growth and guidance of axons in both the spinal cord and the PNS. This Xenopus laevis (African clawed frog) protein is Spondin-1 (spon1).